Reading from the N-terminus, the 127-residue chain is Protein yippee-like 4 (127 aa).

The Yippee domain occupies 27 to 124; sequence RTYSCVHCRA…IEMSHMVKDN (98 aa). Zn(2+) contacts are provided by Cys31, Cys34, Cys87, and Cys90. Phosphothreonine is present on residues Thr92 and Thr93. At Tyr98 the chain carries Phosphotyrosine.

The protein belongs to the yippee family. Detected in brain, spleen and testis.

It localises to the nucleus. The protein localises to the nucleolus. This Mus musculus (Mouse) protein is Protein yippee-like 4 (Ypel4).